The sequence spans 1084 residues: MPRRQDVEKVLVIGSGPIVIGQAAEFDYAGTQACQALREEGLRVVLINSNPATIMTDRHVADRVYIEPITPEFVERVIARERPQGLLPTLGGQVGLNMAMQLEEAGVLARYGVRLLGTPLTAIRRAEDRAEFRALMKEIGEPVPESAIVTTPEEALAFGEEVGYPLIVRPAYTLGGTGGGIAHDREEMRDIVTRGLKLSPVTQCLVERSLLGWKEIEYEVMRDGAGNAITICSMENIDPVGVHTGDSIVVAPSQTLTDREHQILRSAALKIIDALGIEGGCNVQFALNPHAREYMVIEVNPRVSRSSALASKATGYPIAKVAAKIAVGLRLDEIRNPVTGTTYAAFEPALDYCVIKIPRFPFDKFTTADRTLGTQMKATGEVMAIDRTFPGALLKAVRSLETGRDGLFHPAVQALDDQALRERLRTPNDERLWAVAEALRRGVTVPEIHALSAIDPFFLDGIAAIVAMERELADGPLTAERMRRAKQLGFSDAAIGRIVGMDPLAVRRLRLEMGVRPVFKMVDSCAGEFPAATPYYYSCYDEENEAVSPPGRKAVVLGSGPIRIGQGIEFDYSAVHAAWELKAEGIQSIVINNNPETVSTDFDTSDRLYFEPLTLEDVLNVVEQEGDIEGVICQFGGQTAINLAVPLSRAGVRVLGTDIDQMDRAEDRRRFDQLLSDLSIPRPPGGTATSVEEAVAVARRIGYPVLVRPSFVLGGRAMEIVHDEAELRAYMREAIAVSSDRPVLVDRYFLGKEVEVDCVSDGEQVIIAGIMEHLERAGVHSGDSIAVYPTVTLTHRQRETIVAYSTRLALALQVKGLVNIQYVIHGGEIYVIEVNPRSSRTVPFLTKVTGLELAKVATQVIAGHTLAELGYDPDRSGAALVFRTPAGAGWLWPEPAERVAVKAPVFSWQKLTQVDTALSPEMKSTGEVLGVDADLPRALYKALLASGVRVPHRGTVLFTVADRDKAEAMGLARQFSDLGYRIVATTGTARALQACAIPAERVNKVSEGAPAIPDLIRAGKIDLVINTLTRGRDAHRDGFIIRRTAVEHGVPTLTSLDTARAVLTVLSSLREGEEVGISAVQDWV.

Positions 1–401 (MPRRQDVEKV…ALLKAVRSLE (401 aa)) are carboxyphosphate synthetic domain. Residues arginine 129, arginine 169, glycine 175, glycine 176, arginine 208, leucine 210, glutamate 215, glycine 241, valine 242, histidine 243, glutamine 284, and glutamate 298 each contribute to the ATP site. In terms of domain architecture, ATP-grasp 1 spans 133–327 (RALMKEIGEP…IAKVAAKIAV (195 aa)). Mg(2+)-binding residues include glutamine 284, glutamate 298, and asparagine 300. Positions 284, 298, and 300 each coordinate Mn(2+). Residues 402 to 546 (TGRDGLFHPA…YSCYDEENEA (145 aa)) form an oligomerization domain region. The tract at residues 547–947 (VSPPGRKAVV…ALYKALLASG (401 aa)) is carbamoyl phosphate synthetic domain. The region spanning 672–862 (DQLLSDLSIP…LAKVATQVIA (191 aa)) is the ATP-grasp 2 domain. ATP is bound by residues arginine 708, arginine 747, glutamate 753, glycine 778, valine 779, histidine 780, serine 781, glutamine 821, and glutamate 833. Residues glutamine 821, glutamate 833, and asparagine 835 each contribute to the Mg(2+) site. Mn(2+) contacts are provided by glutamine 821, glutamate 833, and asparagine 835. The MGS-like domain maps to 948–1084 (VRVPHRGTVL…VGISAVQDWV (137 aa)). The interval 948–1084 (VRVPHRGTVL…VGISAVQDWV (137 aa)) is allosteric domain.

It belongs to the CarB family. In terms of assembly, composed of two chains; the small (or glutamine) chain promotes the hydrolysis of glutamine to ammonia, which is used by the large (or ammonia) chain to synthesize carbamoyl phosphate. Tetramer of heterodimers (alpha,beta)4. Mg(2+) serves as cofactor. The cofactor is Mn(2+).

The enzyme catalyses hydrogencarbonate + L-glutamine + 2 ATP + H2O = carbamoyl phosphate + L-glutamate + 2 ADP + phosphate + 2 H(+). The catalysed reaction is hydrogencarbonate + NH4(+) + 2 ATP = carbamoyl phosphate + 2 ADP + phosphate + 2 H(+). The protein operates within amino-acid biosynthesis; L-arginine biosynthesis; carbamoyl phosphate from bicarbonate: step 1/1. It functions in the pathway pyrimidine metabolism; UMP biosynthesis via de novo pathway; (S)-dihydroorotate from bicarbonate: step 1/3. Its function is as follows. Large subunit of the glutamine-dependent carbamoyl phosphate synthetase (CPSase). CPSase catalyzes the formation of carbamoyl phosphate from the ammonia moiety of glutamine, carbonate, and phosphate donated by ATP, constituting the first step of 2 biosynthetic pathways, one leading to arginine and/or urea and the other to pyrimidine nucleotides. The large subunit (synthetase) binds the substrates ammonia (free or transferred from glutamine from the small subunit), hydrogencarbonate and ATP and carries out an ATP-coupled ligase reaction, activating hydrogencarbonate by forming carboxy phosphate which reacts with ammonia to form carbamoyl phosphate. The polypeptide is Carbamoyl phosphate synthase large chain (Symbiobacterium thermophilum (strain DSM 24528 / JCM 14929 / IAM 14863 / T)).